The following is a 113-amino-acid chain: Large ribosomal subunit protein uL22 (113 aa).

Belongs to the universal ribosomal protein uL22 family. As to quaternary structure, part of the 50S ribosomal subunit.

In terms of biological role, this protein binds specifically to 23S rRNA; its binding is stimulated by other ribosomal proteins, e.g. L4, L17, and L20. It is important during the early stages of 50S assembly. It makes multiple contacts with different domains of the 23S rRNA in the assembled 50S subunit and ribosome. Its function is as follows. The globular domain of the protein is located near the polypeptide exit tunnel on the outside of the subunit, while an extended beta-hairpin is found that lines the wall of the exit tunnel in the center of the 70S ribosome. In Desulforamulus reducens (strain ATCC BAA-1160 / DSM 100696 / MI-1) (Desulfotomaculum reducens), this protein is Large ribosomal subunit protein uL22.